The following is a 173-amino-acid chain: Ribosome maturation factor RimM (173 aa).

The PRC barrel domain maps to 94–166 (VQEEPYIDII…KIIVELPMGF (73 aa)).

Belongs to the RimM family. As to quaternary structure, binds ribosomal protein uS19.

The protein resides in the cytoplasm. An accessory protein needed during the final step in the assembly of 30S ribosomal subunit, possibly for assembly of the head region. Essential for efficient processing of 16S rRNA. May be needed both before and after RbfA during the maturation of 16S rRNA. It has affinity for free ribosomal 30S subunits but not for 70S ribosomes. The sequence is that of Ribosome maturation factor RimM from Amoebophilus asiaticus (strain 5a2).